Here is a 161-residue protein sequence, read N- to C-terminus: uncharacterized protein (161 aa).

Positions 1 to 29 (MTLYDTVKELQEKLRNGEIEINTFLERLG) form a coiled coil.

This is an uncharacterized protein from Acidianus convivator (ATV).